Consider the following 259-residue polypeptide: Sphinganine C4-monooxygenase 2 (259 aa).

The next 3 membrane-spanning stretches (helical) occupy residues 10–30 (FLGTFVPILVYWVYSGMYICL), 54–74 (AVVKGVLLQQTLQAIISVILF), and 91–111 (ILLLARQFIIAMLVIDTWQYF). Residues 98–234 (FIIAMLVIDT…FVMWDRILGT (137 aa)) form the Fatty acid hydroxylase domain. The Histidine box-1 signature appears at 113 to 117 (HRYMH). Positions 127–131 (HSQHH) match the Histidine box-2 motif. The Histidine box-3 signature appears at 206 to 212 (YHDVHHQ).

This sequence belongs to the sterol desaturase family. The cofactor is Fe cation. As to expression, ubiquitous, with higher levels in flowers and roots.

It is found in the endoplasmic reticulum membrane. The catalysed reaction is a dihydroceramide + 2 Fe(II)-[cytochrome b5] + O2 + 2 H(+) = a phytoceramide + 2 Fe(III)-[cytochrome b5] + H2O. It functions in the pathway membrane lipid metabolism; sphingolipid biosynthesis. Functionally, involved in sphingolipid trihydroxy long-chain base (4-hydroxysphinganine) biosynthesis. Can use C18- and C20-sphinganine as substrates to produce C18- and C20-phytosphinganines (D-ribo-2-amino-1,3,4-trihydroxyoctadecane and -eicosane). In Arabidopsis thaliana (Mouse-ear cress), this protein is Sphinganine C4-monooxygenase 2 (SBH2).